The chain runs to 722 residues: Lysophospholipid acyltransferase 6 (722 aa).

The next 5 membrane-spanning stretches (helical) occupy residues 25–45, 62–84, 104–123, 180–200, and 243–263; these read MVGL…ALFL, LRHT…QQAI, IVQR…VHLM, ALEY…PLVF, and KVVG…IYPV. Residues Asn349 and His381 contribute to the active site. The next 3 membrane-spanning stretches (helical) occupy residues 378-398, 424-444, and 452-472; these read AVWH…AVVV, ILTC…FVLL, and LYLR…FILP. Composition is skewed to polar residues over residues 485-511 and 549-570; these read NGNG…STAA and VEQP…QQQP. 2 disordered regions span residues 485–582 and 650–687; these read NGNG…PTCA and NGAI…DLHP.

This sequence belongs to the membrane-bound acyltransferase family.

It localises to the endoplasmic reticulum. Its subcellular location is the membrane. The enzyme catalyses a 1-acyl-sn-glycero-3-phospho-L-serine + an acyl-CoA = a 1,2-diacyl-sn-glycero-3-phospho-L-serine + CoA. It catalyses the reaction 1-(9Z-octadecenoyl)-sn-glycero-3-phospho-L-serine + (9Z)-hexadecenoyl-CoA = 1-(9Z-octadecenoyl)-2-(9Z-hexadecenoyl)-sn-glycero-3-phospho-L-serine + CoA. The catalysed reaction is 1-(9Z-octadecenoyl)-sn-glycero-3-phospho-L-serine + (9Z)-octadecenoyl-CoA = 1,2-di-(9Z)-octadecenoyl-sn-glycero-3-phospho-L-serine + CoA. It carries out the reaction a 1-acyl-sn-glycero-3-phosphocholine + an acyl-CoA = a 1,2-diacyl-sn-glycero-3-phosphocholine + CoA. The enzyme catalyses 1-hexadecanoyl-sn-glycero-3-phosphocholine + (9Z)-octadecenoyl-CoA = 1-hexadecanoyl-2-(9Z-octadecenoyl)-sn-glycero-3-phosphocholine + CoA. It catalyses the reaction (9Z)-hexadecenoyl-CoA + 1-hexadecanoyl-sn-glycero-3-phosphocholine = 1-hexadecanoyl-2-(9Z-hexadecenoyl)-sn-glycero-3-phosphocholine + CoA. The catalysed reaction is a 1-acyl-sn-glycero-3-phosphoethanolamine + an acyl-CoA = a 1,2-diacyl-sn-glycero-3-phosphoethanolamine + CoA. It carries out the reaction 1-hexadecanoyl-sn-glycero-3-phosphoethanolamine + (9Z)-octadecenoyl-CoA = 1-hexadecanoyl-2-(9Z-octadecenoyl)-sn-glycero-3-phosphoethanolamine + CoA. The enzyme catalyses 1-hexadecanoyl-sn-glycero-3-phosphoethanolamine + (9Z,12Z)-octadecadienoyl-CoA = 1-hexadecanoyl-2-(9Z,12Z-octadecadienoyl)-sn-glycero-3-phosphoethanolamine + CoA. It catalyses the reaction 1-hexadecanoyl-sn-glycero-3-phosphoethanolamine + (9Z)-hexadecenoyl-CoA = 1-hexadecanoyl-2-(9Z)-hexadecenoyl-sn-glycero-3-phosphoethanolamine + CoA. The catalysed reaction is 1-(9Z-octadecenoyl)-sn-glycero-3-phospho-(1'-sn-glycerol) + (9Z)-octadecenoyl-CoA = 1,2-di-(9Z-octadecenoyl)-sn-glycero-3-phospho-(1'-sn-glycerol) + CoA. The protein operates within lipid metabolism; phospholipid metabolism. Functionally, acyltransferase with broad-specificity, that mediates the acylation of lysophospholipids to produce phospholipids (glycerophospholipids). Converts lysophosphatidylserine (1-acyl-2-hydroxy-sn-glycero-3-phospho-L-serine or LPS) to phosphatidylserine (1,2-diacyl-sn-glycero-3-phospho-L-serine or PS) (LPSAT activity), lysophosphatidylcholine (1-acyl-sn-glycero-3-phosphocholine or LPC) to phosphatidylcholine (1,2-diacyl-sn-glycero-3-phosphocholine or PC) (LPCAT activity), also lysophosphatidylethanolamine (1-acyl-sn-glycero-3-phosphochethanolamine or LPE) to phosphatidylchethanolamine (LPEAT activity) and lysophosphatidylglycerol (1-acyl-2-hydroxy-sn-glycero-3-phospho-(1'-sn-glycerol) or LPG) to phosphatidylglycerol (1,2-diacyl-sn-glycero-3-phospho-(1'-sn-glycerol) or PG) (LPGAT activity). Has a preference for unsaturated fatty acids of at least 16 carbons such as oleoyl-CoA ((9Z)-octadecenoyl-CoA) and palmitoleoyl-CoA ((9Z)-hexadecenoyl-CoA). Glycerophospholipids are important structural and functional components of cellular membrane, acyl-chain remodeling regulates the molecular species distribution of glycerophospholipids which can affect membrane fluidity and curvature. Essential for fertility and viability together with Nessy protein (Nes). The protein is Lysophospholipid acyltransferase 6 of Drosophila melanogaster (Fruit fly).